Here is a 368-residue protein sequence, read N- to C-terminus: Phospho-N-acetylmuramoyl-pentapeptide-transferase (368 aa).

9 helical membrane-spanning segments follow: residues 23 to 43 (YLTFRASAAAITALLIIIFAG), 72 to 92 (VPTMGGLMIIFAIEVSAFLWA), 98 to 118 (HVWLIMLAVFWMGLIGFIDDY), 139 to 159 (VTLGLVIGFYTWNDPVFSVLL), 170 to 190 (LSVDYGIFYIPVVIFIITAVS), 201 to 221 (GLAAGNAAIVTFALGVFAYLC), 238 to 258 (AGEVAVVSMAIVMACVGFLWF), 281 to 301 (VIALMIKQELLLPVLAGVFFV), and 345 to 365 (KIVIRFWIISILLFLTSLMTL).

The protein belongs to the glycosyltransferase 4 family. MraY subfamily. Requires Mg(2+) as cofactor.

It is found in the cell inner membrane. The enzyme catalyses UDP-N-acetyl-alpha-D-muramoyl-L-alanyl-gamma-D-glutamyl-meso-2,6-diaminopimeloyl-D-alanyl-D-alanine + di-trans,octa-cis-undecaprenyl phosphate = di-trans,octa-cis-undecaprenyl diphospho-N-acetyl-alpha-D-muramoyl-L-alanyl-D-glutamyl-meso-2,6-diaminopimeloyl-D-alanyl-D-alanine + UMP. It participates in cell wall biogenesis; peptidoglycan biosynthesis. Functionally, catalyzes the initial step of the lipid cycle reactions in the biosynthesis of the cell wall peptidoglycan: transfers peptidoglycan precursor phospho-MurNAc-pentapeptide from UDP-MurNAc-pentapeptide onto the lipid carrier undecaprenyl phosphate, yielding undecaprenyl-pyrophosphoryl-MurNAc-pentapeptide, known as lipid I. The protein is Phospho-N-acetylmuramoyl-pentapeptide-transferase of Chlorobaculum tepidum (strain ATCC 49652 / DSM 12025 / NBRC 103806 / TLS) (Chlorobium tepidum).